Reading from the N-terminus, the 194-residue chain is uncharacterized protein (194 aa).

An HTH tetR-type domain is found at 6-66 (SGKYEKILQA…AIAENLLTHT (61 aa)). A DNA-binding region (H-T-H motif) is located at residues 29–48 (SISDIVKKAGTAQGTFYLYF).

This is an uncharacterized protein from Bacillus subtilis (strain 168).